Here is a 182-residue protein sequence, read N- to C-terminus: uncharacterized protein (182 aa).

Positions Met-1–Asn-23 are enriched in polar residues. Residues Met-1–Asn-33 are disordered.

It belongs to the peptidase M24 family.

This is an uncharacterized protein from Caenorhabditis elegans.